The primary structure comprises 241 residues: UDP-2,3-diacylglucosamine hydrolase (241 aa).

Mn(2+) contacts are provided by Asp8, His10, Asp41, Asn79, and His114. A substrate-binding site is contributed by 79–80 (NR). Residues Asp122, Ser160, Lys167, and His195 each contribute to the substrate site. The Mn(2+) site is built by His195 and His197.

Belongs to the LpxH family. Mn(2+) is required as a cofactor.

It localises to the cell inner membrane. It carries out the reaction UDP-2-N,3-O-bis[(3R)-3-hydroxytetradecanoyl]-alpha-D-glucosamine + H2O = 2-N,3-O-bis[(3R)-3-hydroxytetradecanoyl]-alpha-D-glucosaminyl 1-phosphate + UMP + 2 H(+). It participates in glycolipid biosynthesis; lipid IV(A) biosynthesis; lipid IV(A) from (3R)-3-hydroxytetradecanoyl-[acyl-carrier-protein] and UDP-N-acetyl-alpha-D-glucosamine: step 4/6. Functionally, hydrolyzes the pyrophosphate bond of UDP-2,3-diacylglucosamine to yield 2,3-diacylglucosamine 1-phosphate (lipid X) and UMP by catalyzing the attack of water at the alpha-P atom. Involved in the biosynthesis of lipid A, a phosphorylated glycolipid that anchors the lipopolysaccharide to the outer membrane of the cell. This is UDP-2,3-diacylglucosamine hydrolase from Azotobacter vinelandii (strain DJ / ATCC BAA-1303).